The sequence spans 526 residues: MLHSLPIRRALISVSDKGGLVPFARFLADHDIEILSTGGSAKALADAGIPVTEVADFTGFPEMLDGRVKTLHPKIHGGILGIRDNPEHQRAMAAHEILPIDLVVVNLYPFEATVAKGAAFEDCVENIDIGGPALIRAAAKNHEAVTVVVDPEDYQPVMDAMTAEGGATTLELRRKLASAAFARCGAYDGAISRWFQGQVGDETPRHIVFAGRLRQTLRYGENPHQKAAFYGHGIARPGVASAEQLQGKELSYNNINDTDAAFDLVCEFAEPAVAIIKHANPCGVAQGASVVEAYKAALACDPVSAFGGIVALNRPIDRDSAVEITKIFTEVVIAPDADAEARAIFAAKKNLRLLLTGVVADTTAPGLTVRSVAGGMLVQDRDAADLLSADLKVVSKRTPTERELADMLIAFKVCKHVKSNAIVYVKDGATVGIGAGQMSRVDSARIASWKADEAAEAAGLAQSPTQGSVVASDAFFPFADGLLAAAKAGATAVIQPGGSMRDDEVIKAADEAGLAMVFTGLRHFRH.

The MGS-like domain maps to 1 to 149 (MLHSLPIRRA…KNHEAVTVVV (149 aa)).

This sequence belongs to the PurH family.

It carries out the reaction (6R)-10-formyltetrahydrofolate + 5-amino-1-(5-phospho-beta-D-ribosyl)imidazole-4-carboxamide = 5-formamido-1-(5-phospho-D-ribosyl)imidazole-4-carboxamide + (6S)-5,6,7,8-tetrahydrofolate. The enzyme catalyses IMP + H2O = 5-formamido-1-(5-phospho-D-ribosyl)imidazole-4-carboxamide. It participates in purine metabolism; IMP biosynthesis via de novo pathway; 5-formamido-1-(5-phospho-D-ribosyl)imidazole-4-carboxamide from 5-amino-1-(5-phospho-D-ribosyl)imidazole-4-carboxamide (10-formyl THF route): step 1/1. The protein operates within purine metabolism; IMP biosynthesis via de novo pathway; IMP from 5-formamido-1-(5-phospho-D-ribosyl)imidazole-4-carboxamide: step 1/1. The chain is Bifunctional purine biosynthesis protein PurH from Rhodospirillum rubrum (strain ATCC 11170 / ATH 1.1.1 / DSM 467 / LMG 4362 / NCIMB 8255 / S1).